We begin with the raw amino-acid sequence, 337 residues long: Fructose-1,6-bisphosphatase class 1 (337 aa).

Glu91, Asp113, Leu115, and Asp116 together coordinate Mg(2+). Substrate-binding positions include Asp116–Ser119, Asn209, Tyr242, and Lys275. Residue Glu281 participates in Mg(2+) binding.

The protein belongs to the FBPase class 1 family. In terms of assembly, homotetramer. Mg(2+) serves as cofactor.

Its subcellular location is the cytoplasm. It carries out the reaction beta-D-fructose 1,6-bisphosphate + H2O = beta-D-fructose 6-phosphate + phosphate. It participates in carbohydrate biosynthesis; gluconeogenesis. This chain is Fructose-1,6-bisphosphatase class 1, found in Nitratidesulfovibrio vulgaris (strain DP4) (Desulfovibrio vulgaris).